A 313-amino-acid polypeptide reads, in one-letter code: MSDLLLLGLIGGLTLLLLLTLLAFAGYSGLLAGVEVSAGSPPIRNVTVAYKFHMGLYGETGRLFTESCSISPKLRSIAVYYDNPHMVPPDKCRCAVGSILSEGEESPSPELIDLYQKFGFKVFSFPAPSHVVTATFPYTTILSIWLATRRVHPALDTYIKERKLCAYPRLEIYQEDQIHFMCPLARQGDFYVPEMKETEWKWRGLVEAIDTQVDGTGADTMSDTSSVSLEVSPGSRETSAATLSPGASSRGWDDGDTRSEHSYSESGASGSSFEELDLEGEGPLGESRLDPGTEPLGTTKWLWEPTAPEKGKE.

Over 1-6 (MSDLLL) the chain is Lumenal. A helical; Signal-anchor for type III membrane protein membrane pass occupies residues 7-31 (LGLIGGLTLLLLLTLLAFAGYSGLL). The Cytoplasmic segment spans residues 32 to 313 (AGVEVSAGSP…EPTAPEKGKE (282 aa)). The segment at 193-313 (PEMKETEWKW…EPTAPEKGKE (121 aa)) is disordered. Residues 219-247 (DTMSDTSSVSLEVSPGSRETSAATLSPGA) show a composition bias toward polar residues. 2 positions are modified to phosphoserine: S239 and S244. Residues 251–263 (GWDDGDTRSEHSY) are compositionally biased toward basic and acidic residues. The segment covering 264–273 (SESGASGSSF) has biased composition (low complexity). The LIR motif signature appears at 273–276 (FEEL).

In terms of assembly, interacts (via the LIR motif) with ATG8 family proteins MAP1LC3A, MAP1LC3B, GABARAP and GABARAPL1. Interacts with VCP/p97; bridging VCP/p97 to covalent DNA-protein cross-links (DPCs). Interacts with TOP1 (when sumoylated).

The protein localises to the endoplasmic reticulum membrane. It is found in the cytoplasmic vesicle. Its subcellular location is the autophagosome. It localises to the cytoplasm. The protein resides in the cytosol. The protein localises to the nucleus. It is found in the chromosome. Its function is as follows. Major reticulophagy (also called ER-phagy) receptor that acts independently of other candidate reticulophagy receptors to remodel subdomains of the endoplasmic reticulum into autophagosomes upon nutrient stress, which then fuse with lysosomes for endoplasmic reticulum turnover. The ATG8-containing isolation membrane (IM) cradles a tubular segment of TEX264-positive ER near a three-way junction, allowing the formation of a synapse of 2 juxtaposed membranes with trans interaction between the TEX264 and ATG8 proteins. Expansion of the IM would extend the capture of ER, possibly through a 'zipper-like' process involving continued trans TEX264-ATG8 interactions, until poorly understood mechanisms lead to the fission of relevant membranes and, ultimately, autophagosomal membrane closure. Also involved in the repair of covalent DNA-protein cross-links (DPCs) during DNA synthesis: acts by bridging VCP/p97 to covalent DNA-protein cross-links (DPCs) and initiating resolution of DPCs by SPRTN. The protein is Testis-expressed protein 264 of Homo sapiens (Human).